The sequence spans 130 residues: Large ribosomal subunit protein bL19 (130 aa).

The protein belongs to the bacterial ribosomal protein bL19 family.

This protein is located at the 30S-50S ribosomal subunit interface and may play a role in the structure and function of the aminoacyl-tRNA binding site. The chain is Large ribosomal subunit protein bL19 from Burkholderia ambifaria (strain ATCC BAA-244 / DSM 16087 / CCUG 44356 / LMG 19182 / AMMD) (Burkholderia cepacia (strain AMMD)).